We begin with the raw amino-acid sequence, 142 residues long: Large ribosomal subunit protein uL13 (142 aa).

This sequence belongs to the universal ribosomal protein uL13 family. In terms of assembly, part of the 50S ribosomal subunit.

Functionally, this protein is one of the early assembly proteins of the 50S ribosomal subunit, although it is not seen to bind rRNA by itself. It is important during the early stages of 50S assembly. This Stenotrophomonas maltophilia (strain K279a) protein is Large ribosomal subunit protein uL13.